The chain runs to 694 residues: Transcriptional activator HAA1 (694 aa).

Positions 1-40 form a DNA-binding region, copper-fist; that stretch reads MVLINGIKYACERCIRGHRVTTCNHTDQPLMMIKPKGRPS. Zn(2+) is bound by residues cysteine 11, cysteine 14, cysteine 23, and histidine 25. Disordered stretches follow at residues 104–128 and 209–240; these read QKRH…SQPM and FNFL…DSSV. A compositionally biased stretch (polar residues) spans 111–126; sequence SPSSSQKKGRSISRSQ. A phosphoserine mark is found at serine 125, serine 231, serine 241, and serine 291. 4 disordered regions span residues 332-388, 479-514, 566-588, and 650-677; these read FDIN…NGLF, EKER…HRYP, SSIH…SRQD, and MIST…PPSQ. Residues 336-349 are compositionally biased toward polar residues; it reads DNCNRINSKSYSKT. The segment covering 350–378 has biased composition (low complexity); sequence NSMNGNGMNNSNNNNINSNGNDKNNNNSS. Composition is skewed to polar residues over residues 566–577 and 664–677; these read SSIHSVPQSINS and SPMS…PPSQ.

Its subcellular location is the nucleus. In terms of biological role, regulates the transcription of a set of genes, many of which encode membrane proteins. Among the genes regulated are YGR138C and YRO2. Does not seem to be dependent on copper. The polypeptide is Transcriptional activator HAA1 (HAA1) (Saccharomyces cerevisiae (strain ATCC 204508 / S288c) (Baker's yeast)).